The chain runs to 305 residues: Serine/threonine-protein phosphatase 4 catalytic subunit (305 aa).

Mn(2+) is bound by residues Asp-52, His-54, Asp-80, and Asn-112. Catalysis depends on His-113, which acts as the Proton donor. Mn(2+)-binding residues include His-162 and His-236.

This sequence belongs to the PPP phosphatase family. PP-4 (PP-X) subfamily. As to quaternary structure, serine/threonine-protein phosphatase 4 (PP4) occurs in different assemblies of the catalytic and one or more regulatory subunits. Probably part of a PP4 complex containing ppp4c and ppp4r2. Interacts with smkA. Mn(2+) is required as a cofactor.

Its subcellular location is the cytoplasm. The protein resides in the nucleus. The enzyme catalyses O-phospho-L-seryl-[protein] + H2O = L-seryl-[protein] + phosphate. It catalyses the reaction O-phospho-L-threonyl-[protein] + H2O = L-threonyl-[protein] + phosphate. Required for development, chemotaxis and the expression of numerous genes. This is Serine/threonine-protein phosphatase 4 catalytic subunit (ppp4c) from Dictyostelium discoideum (Social amoeba).